Here is a 117-residue protein sequence, read N- to C-terminus: MNLQIEMEHHRGVLIVRLSGELDHHTSDMVRMQMDEAIQRRQCEHIVLSLKNLQFMDSSGLGVILGRYKLINQKGGEMAVCDVNPPVHRLLDMSGLFKIMPIYDNEVNALTELEVVS.

The STAS domain occupies 3–113 (LQIEMEHHRG…DNEVNALTEL (111 aa)). Serine 58 is modified (phosphoserine).

The protein belongs to the anti-sigma-factor antagonist family. In terms of processing, phosphorylated by SpoIIAB on a serine residue.

In the phosphorylated form it could act as an anti-anti-sigma factor that counteracts SpoIIAB and thus releases sigma f from inhibition. The polypeptide is Anti-sigma F factor antagonist (spoIIAA) (Paenibacillus polymyxa (Bacillus polymyxa)).